The following is a 316-amino-acid chain: Pantothenate kinase (316 aa).

Residue 95–102 participates in ATP binding; it reads GSVAVGKS.

This sequence belongs to the prokaryotic pantothenate kinase family.

It localises to the cytoplasm. The enzyme catalyses (R)-pantothenate + ATP = (R)-4'-phosphopantothenate + ADP + H(+). Its pathway is cofactor biosynthesis; coenzyme A biosynthesis; CoA from (R)-pantothenate: step 1/5. The protein is Pantothenate kinase of Shewanella sp. (strain MR-7).